Consider the following 115-residue polypeptide: Large ribosomal subunit protein uL18 (115 aa).

Belongs to the universal ribosomal protein uL18 family. In terms of assembly, part of the 50S ribosomal subunit; part of the 5S rRNA/L5/L18/L25 subcomplex. Contacts the 5S and 23S rRNAs.

Its function is as follows. This is one of the proteins that bind and probably mediate the attachment of the 5S RNA into the large ribosomal subunit, where it forms part of the central protuberance. This is Large ribosomal subunit protein uL18 from Ruthia magnifica subsp. Calyptogena magnifica.